Reading from the N-terminus, the 119-residue chain is Ribonuclease P protein component (119 aa).

It belongs to the RnpA family. In terms of assembly, consists of a catalytic RNA component (M1 or rnpB) and a protein subunit.

It carries out the reaction Endonucleolytic cleavage of RNA, removing 5'-extranucleotides from tRNA precursor.. Functionally, RNaseP catalyzes the removal of the 5'-leader sequence from pre-tRNA to produce the mature 5'-terminus. It can also cleave other RNA substrates such as 4.5S RNA. The protein component plays an auxiliary but essential role in vivo by binding to the 5'-leader sequence and broadening the substrate specificity of the ribozyme. The polypeptide is Ribonuclease P protein component (Dictyoglomus turgidum (strain DSM 6724 / Z-1310)).